The following is a 724-amino-acid chain: Solute carrier organic anion transporter family member 4C1 (724 aa).

The disordered stretch occupies residues methionine 1 to glutamate 80. The Cytoplasmic portion of the chain corresponds to methionine 1–lysine 101. 2 positions are modified to phosphoserine: serine 15 and serine 16. Threonine 19 carries the phosphothreonine modification. Residues serine 24, serine 26, and serine 28 each carry the phosphoserine modification. The span at alanine 25–proline 46 shows a compositional bias: polar residues. The helical transmembrane segment at glycine 102–valine 122 threads the bilayer. The Extracellular segment spans residues asparagine 123–glycine 141. Residues leucine 142–glycine 162 traverse the membrane as a helical segment. At glutamate 163–proline 168 the chain is on the cytoplasmic side. The helical transmembrane segment at arginine 169–glycine 193 threads the bilayer. Over arginine 194 to serine 218 the chain is Extracellular. Residues leucine 219–isoleucine 249 traverse the membrane as a helical segment. Over aspartate 250–serine 269 the chain is Cytoplasmic. The chain crosses the membrane as a helical span at residues isoleucine 270–valine 290. Residues alanine 291–leucine 306 are Extracellular-facing. A helical membrane pass occupies residues glycine 307–proline 331. The Cytoplasmic portion of the chain corresponds to lysine 332–asparagine 376. The chain crosses the membrane as a helical span at residues leucine 377–threonine 398. Topologically, residues glycine 399–phenylalanine 418 are extracellular. The chain crosses the membrane as a helical span at residues alanine 419 to valine 442. Over serine 443 to lysine 446 the chain is Cytoplasmic. The helical transmembrane segment at methionine 447 to phenylalanine 470 threads the bilayer. Residues isoleucine 471–phenylalanine 580 are Extracellular-facing. Residues glycine 494–glutamate 549 enclose the Kazal-like domain. 3 cysteine pairs are disulfide-bonded: cysteine 500–cysteine 530, cysteine 506–cysteine 526, and cysteine 515–cysteine 547. A helical transmembrane segment spans residues leucine 581–leucine 603. Residues arginine 604–serine 612 are Cytoplasmic-facing. A helical transmembrane segment spans residues leucine 613–isoleucine 638. Topologically, residues aspartate 639 to serine 672 are extracellular. A helical membrane pass occupies residues valine 673–tyrosine 690. Topologically, residues lysine 691–glycine 724 are cytoplasmic.

It belongs to the organo anion transporter (TC 2.A.60) family. Predominantly expressed in kidney and lung but also weakly expressed in brain. Localizes primarily in the proximal straight tubules, the S3 fraction of the nephron.

Its subcellular location is the basolateral cell membrane. It localises to the apical cell membrane. The catalysed reaction is estrone 3-sulfate(out) = estrone 3-sulfate(in). It catalyses the reaction L-thyroxine(out) = L-thyroxine(in). It carries out the reaction 3,3',5-triiodo-L-thyronine(out) = 3,3',5-triiodo-L-thyronine(in). The enzyme catalyses chenodeoxycholate(out) = chenodeoxycholate(in). The catalysed reaction is glycocholate(out) = glycocholate(in). It catalyses the reaction L-homoarginine(in) = L-homoarginine(out). It carries out the reaction L-arginine(in) = L-arginine(out). The enzyme catalyses N(omega),N(omega)-dimethyl-L-arginine(out) = N(omega),N(omega)-dimethyl-L-arginine(in). Functionally, mediates the transport of organic anions such as steroids (estrone 3-sulfate, chenodeoxycholate, glycocholate) and thyroid hormones (3,3',5-triiodo-L-thyronine (T3), L-thyroxine (T4)), in the kidney. Capable of transporting cAMP and pharmacological substances such as digoxin, ouabain and methotrexate. Transport is independent of sodium, chloride ion, and ATP. Transport activity is stimulated by an acidic extracellular environment due to increased substrate affinity to the transporter. The driving force for this transport activity is currently not known. The role of hydrogencarbonate (HCO3(-), bicarbonate) as the probable counteranion that exchanges for organic anions is still not well defined. Functions as an uptake transporter at the apical membrane, suggesting a role in renal reabsorption. Involved in the renal secretion of the uremic toxin ADMA (N(omega),N(omega)-dimethyl-L-arginine or asymmetrical dimethylarginine), which is associated to cardiovascular events and mortality, and the structurally related amino acids L-arginine and L-homoarginine (a cardioprotective biomarker). Can act bidirectionally, suggesting a dual protective role of this transport protein; exporting L-homoarginine after being synthesized in proximal tubule cells, and mediating uptake of ADMA from the blood into proximal tubule cells where it is degraded by the enzyme dimethylarginine dimethylaminohydrolase 1 (DDAH1). May be involved in sperm maturation by enabling directed movement of organic anions and compounds within or between cells. This ion-transporting process is important to maintain the strict epididymal homeostasis necessary for sperm maturation. May have a role in secretory functions since seminal vesicle epithelial cells are assumed to secrete proteins involved in decapacitation by modifying surface proteins to facilitate the acquisition of the ability to fertilize the egg. This chain is Solute carrier organic anion transporter family member 4C1, found in Rattus norvegicus (Rat).